Reading from the N-terminus, the 58-residue chain is uncharacterized protein (58 aa).

Residues 18–38 (WLMIVLLFCSTGMVFLATILE) traverse the membrane as a helical segment.

It localises to the membrane. This is an uncharacterized protein from Saccharomyces cerevisiae (strain ATCC 204508 / S288c) (Baker's yeast).